We begin with the raw amino-acid sequence, 475 residues long: Glutamate--tRNA ligase 2 (475 aa).

A 'HIGH' region motif is present at residues 11–21 (PSPTGFLHIGG). A compositionally biased stretch (basic and acidic residues) spans 116–133 (AEGRPPRYDGTWRDKDPA). The interval 116 to 137 (AEGRPPRYDGTWRDKDPAEAPS) is disordered. Residues 240–244 (KLSKR) carry the 'KMSKS' region motif. Lys243 serves as a coordination point for ATP.

It belongs to the class-I aminoacyl-tRNA synthetase family. Glutamate--tRNA ligase type 1 subfamily. In terms of assembly, monomer.

The protein localises to the cytoplasm. It carries out the reaction tRNA(Glu) + L-glutamate + ATP = L-glutamyl-tRNA(Glu) + AMP + diphosphate. Its function is as follows. Catalyzes the attachment of glutamate to tRNA(Glu) in a two-step reaction: glutamate is first activated by ATP to form Glu-AMP and then transferred to the acceptor end of tRNA(Glu). The polypeptide is Glutamate--tRNA ligase 2 (Chelativorans sp. (strain BNC1)).